A 1604-amino-acid polypeptide reads, in one-letter code: Calmodulin-regulated spectrin-associated protein 1 (1604 aa).

The residue at position 216 (S216) is a Phosphoserine. A Calponin-homology (CH) domain is found at 235–350 (PVDFARVVRY…FIAELFWWFE (116 aa)). S390, S394, and S435 each carry phosphoserine. The disordered stretch occupies residues 394–413 (SPAAMSPADLPPSTQPLTEG). The segment at 444–491 (RQKQQKVSQAEEIPDQRHRSNSLTRADGQPRGAAIAWPDKKNRPVSQP) is disordered. Position 531 is a phosphothreonine (T531). A phosphoserine mark is found at S571, S574, S581, S593, S607, S647, S739, S745, S755, and S757. The interval 642-671 (MAKRPSEGSQPLVRKKVTGSHGSRDLNRTF) is disordered. A compositionally biased stretch (basic and acidic residues) spans 784-806 (EEESAKLQEDMKVKEHEDKDDAS). Disordered stretches follow at residues 784 to 824 (EEES…SMSM) and 842 to 888 (LNSC…KDPA). 2 stretches are compositionally biased toward low complexity: residues 813–824 (LSTTSQLSSMSM) and 847–858 (TKSSTSSSQKTT). The segment covering 874 to 886 (QKREQSPSRHSKD) has biased composition (basic and acidic residues). The interval 888–909 (ASLLASELVQLHMQLEEKRRAI) is sufficient for interaction with SPTBN1. Coiled-coil stretches lie at residues 890-926 (LLAS…QRLK) and 1026-1058 (DVNE…QEQL). Residues 920–939 (SARQRLKLGKAAFLHVVKKG) are sufficient for interaction with calmodulin. 3 disordered regions span residues 1085–1163 (FVEP…GELP), 1246–1271 (PDED…KPGV), and 1298–1448 (RKAE…DRDW). The residue at position 1090 (S1090) is a Phosphoserine. The span at 1113 to 1124 (RPAELKVPKDRQ) shows a compositional bias: basic and acidic residues. Polar residues predominate over residues 1125–1137 (QGCSRSKTPTPSV). Residue S1154 is modified to Phosphoserine. Basic and acidic residues-rich tracts occupy residues 1246–1258 (PDED…HESS) and 1298–1348 (RKAE…EYLR). A coiled-coil region spans residues 1286–1357 (AKKRAAFLLK…RRKQQQALEE (72 aa)). The span at 1363 to 1374 (PKSKPKKPRPKS) shows a compositional bias: basic residues. Positions 1382–1394 (SDSGTKCSSTPDN) are enriched in polar residues. Over residues 1395–1412 (LSQTHSGSSLSLASAATT) the composition is skewed to low complexity. Phosphoserine occurs at positions 1400 and 1429. Positions 1465-1599 (GPKLFKEPSS…QPKRPTVPKK (135 aa)) constitute a CKK domain. Y1539 carries the phosphotyrosine modification.

This sequence belongs to the CAMSAP1 family. As to quaternary structure, interacts with spectrin via SPTBN1; the interaction is direct. Interacts with calmodulin; calcium-dependent it prevents interaction with spectrin. In brain, specifically expressed in astrocytes (at protein level).

It is found in the cytoplasm. Its subcellular location is the cytoskeleton. Functionally, key microtubule-organizing protein that specifically binds the minus-end of non-centrosomal microtubules and regulates their dynamics and organization. Specifically recognizes growing microtubule minus-ends and stabilizes microtubules. Acts on free microtubule minus-ends that are not capped by microtubule-nucleating proteins or other factors and protects microtubule minus-ends from depolymerization. In contrast to CAMSAP2 and CAMSAP3, tracks along the growing tips of minus-end microtubules without significantly affecting the polymerization rate: binds at the very tip of the microtubules minus-end and acts as a minus-end tracking protein (-TIP) that dissociates from microtubules after allowing tubulin incorporation. Through interaction with spectrin may regulate neurite outgrowth. This is Calmodulin-regulated spectrin-associated protein 1 (Camsap1) from Rattus norvegicus (Rat).